Consider the following 2282-residue polypeptide: Protein Ycf2 (2282 aa).

Residue 1637–1644 (GSIGTGRS) participates in ATP binding.

The protein belongs to the Ycf2 family.

The protein resides in the plastid. Its subcellular location is the chloroplast stroma. In terms of biological role, probable ATPase of unknown function. Its presence in a non-photosynthetic plant (Epifagus virginiana) and experiments in tobacco indicate that it has an essential function which is probably not related to photosynthesis. The chain is Protein Ycf2 from Citrus sinensis (Sweet orange).